Consider the following 146-residue polypeptide: Small ribosomal subunit protein uS9x (146 aa).

The protein belongs to the universal ribosomal protein uS9 family.

Its subcellular location is the cytoplasm. In Arabidopsis thaliana (Mouse-ear cress), this protein is Small ribosomal subunit protein uS9x (RPS16C).